Consider the following 138-residue polypeptide: Small ribosomal subunit protein uS11c (138 aa).

A disordered region spans residues 1–24 (MAKPIPKVGSRRNGRSSARKSARR). Positions 9 to 24 (GSRRNGRSSARKSARR) are enriched in basic residues.

It belongs to the universal ribosomal protein uS11 family. In terms of assembly, part of the 30S ribosomal subunit.

It is found in the plastid. The protein resides in the chloroplast. The sequence is that of Small ribosomal subunit protein uS11c from Gossypium hirsutum (Upland cotton).